Consider the following 561-residue polypeptide: Cation diffusion facilitator family protein 1 (561 aa).

Residues 1–20 show a composition bias toward basic and acidic residues; sequence MEVTMEDRSVKADKADRDDN. Positions 1–26 are disordered; that stretch reads MEVTMEDRSVKADKADRDDNNTTSTE. Topologically, residues 1 to 112 are cytoplasmic; the sequence is MEVTMEDRSV…SESVKGVSRS (112 aa). A helical membrane pass occupies residues 113–133; the sequence is LIIQIGMTVIFCALEFITGVV. Residues 134-136 lie on the Extracellular side of the membrane; that stretch reads CSS. The helical transmembrane segment at 137 to 157 threads the bilayer; it reads IAMLADSYHMAADVMALIVAF. The Cytoplasmic portion of the chain corresponds to 158–176; that stretch reads TCIKIATRPSTRLGYGWVR. Residues 177–197 traverse the membrane as a helical segment; that stretch reads AETLGGFFNGIFMCTVCVLVF. Residues 198-215 are Extracellular-facing; sequence QEAVGRIINVHMITHPLQ. Residues 216–236 form a helical membrane-spanning segment; it reads VLVIGFIGLLINLFGMFNLSG. Topologically, residues 237–391 are cytoplasmic; sequence HGHSHGGGSH…NVNIHGVWLH (155 aa). The disordered stretch occupies residues 240–304; it reads SHGGGSHGHS…HTRLNGKFRS (65 aa). The tract at residues 246–270 is 6 X 2 AA approximate repeats of H-G; that stretch reads HGHSHGGSHGHSHNNKKTKKNDGHG. The segment covering 247–264 has biased composition (basic residues); it reads GHSHGGSHGHSHNNKKTK. The helical transmembrane segment at 392–412 threads the bilayer; the sequence is LLSDAFGSVIVMISAGFVYFL. Over 413-420 the chain is Extracellular; sequence PTWKIAAY. A helical transmembrane segment spans residues 421 to 441; it reads LDPILSISLASIMGFTAVVLV. Over 442–561 the chain is Cytoplasmic; it reads KTSGEKLLKQ…SVSTENEITE (120 aa).

This sequence belongs to the cation diffusion facilitator (CDF) transporter (TC 2.A.4) family. SLC30A subfamily. As to quaternary structure, interacts with lin-45 in a zinc-dependent manner. Expressed in intestinal cells. Expressed in the vulva.

The protein localises to the basolateral cell membrane. Its function is as follows. Involved in the regulation of Pn.p cell fate determination. Involved in zinc metabolism and the decrease of the cytosolic zinc concentration which is thought to modulate Ras signaling. Involved in zinc transport from the intestinal lumen to the pseudocoelum. The chain is Cation diffusion facilitator family protein 1 (cdf-1) from Caenorhabditis elegans.